A 233-amino-acid chain; its full sequence is tRNA pseudouridine synthase B (233 aa).

The active-site Nucleophile is the D48.

It belongs to the pseudouridine synthase TruB family. Type 1 subfamily.

The enzyme catalyses uridine(55) in tRNA = pseudouridine(55) in tRNA. Its function is as follows. Responsible for synthesis of pseudouridine from uracil-55 in the psi GC loop of transfer RNAs. This chain is tRNA pseudouridine synthase B, found in Bacteroides fragilis (strain ATCC 25285 / DSM 2151 / CCUG 4856 / JCM 11019 / LMG 10263 / NCTC 9343 / Onslow / VPI 2553 / EN-2).